The following is a 297-amino-acid chain: MAKALQGVMAALLTPFDHQQQLDSESLRRLVRFNIGQGIDGLYVGGSTGEAFVQSLAEREQVLEIVAEEAKGKITLIAHVGTVSTAESQQLASAAKRYGFDAVSAVTPFYYPFSFEEHCDHYRAIIDSADGLPMVVYNIPALSGVKLTLDQINTLVTLPGVNALKQTSGDLFQMEQIRRAHPDLVLYNGYDEIFASGLLAGADGGIGSTYNIMGWRYQGIVQALREGDVAKAQRLQTECNKVIDLLIKTGVFRGLKTVLHYMDVVSVPLCRKPFAPVDEKYLPALKALAQQLMEEKA.

Aceneuramate contacts are provided by Ser-47 and Thr-48. Tyr-137 acts as the Proton donor in catalysis. Lys-165 acts as the Schiff-base intermediate with substrate in catalysis. Residues Thr-167, Gly-189, Asp-191, Glu-192, and Ser-208 each coordinate aceneuramate.

Belongs to the DapA family. NanA subfamily. Homotetramer.

Its subcellular location is the cytoplasm. The enzyme catalyses aceneuramate = aldehydo-N-acetyl-D-mannosamine + pyruvate. The protein operates within amino-sugar metabolism; N-acetylneuraminate degradation; D-fructose 6-phosphate from N-acetylneuraminate: step 1/5. Its function is as follows. Catalyzes the reversible aldol cleavage of N-acetylneuraminic acid (sialic acid; Neu5Ac) to form pyruvate and N-acetylmannosamine (ManNAc) via a Schiff base intermediate. The chain is N-acetylneuraminate lyase from Salmonella paratyphi A (strain AKU_12601).